The chain runs to 435 residues: GTPase Der (435 aa).

EngA-type G domains follow at residues Pro-4–Ala-167 and Ile-175–Asn-350. Residues Gly-10–Ser-17, Asp-57–Ile-61, Asn-119–Asp-122, Gly-181–Ser-188, Asp-228–Ile-232, and Asn-293–Asp-296 contribute to the GTP site. Residues Gln-351 to Lys-435 form the KH-like domain.

The protein belongs to the TRAFAC class TrmE-Era-EngA-EngB-Septin-like GTPase superfamily. EngA (Der) GTPase family. Associates with the 50S ribosomal subunit.

GTPase that plays an essential role in the late steps of ribosome biogenesis. In Lactobacillus delbrueckii subsp. bulgaricus (strain ATCC 11842 / DSM 20081 / BCRC 10696 / JCM 1002 / NBRC 13953 / NCIMB 11778 / NCTC 12712 / WDCM 00102 / Lb 14), this protein is GTPase Der.